The sequence spans 142 residues: Maximins y/H11 (142 aa).

An N-terminal signal peptide occupies residues 1–18 (MNFKYIVAVSFLITSGYA). Positions 19 to 43 (ESVKNDEQSLSQRDVLEEESLREIR) are excised as a propeptide. A Phenylalanine amide modification is found at Phe68. Positions 72–121 (SAEDHEVMKRLEAVIRDLDSLDHPEEASERETRGFNQEEIANLFTKKEKR) are excised as a propeptide. An Isoleucine amide modification is found at Ile141.

It belongs to the bombinin family. As to expression, expressed by the skin glands.

Its subcellular location is the secreted. Its function is as follows. Maximin-y shows antimicrobial activity against bacteria and against the fungus C.albicans. It has little hemolytic activity. Maximin-H11 shows antimicrobial activity against bacteria and against the fungus C.albicans. Shows strong hemolytic activity. This is Maximins y/H11 from Bombina maxima (Giant fire-bellied toad).